Here is a 1796-residue protein sequence, read N- to C-terminus: Y' element ATP-dependent helicase protein 1 copy 5 (1796 aa).

A disordered region spans residues 743 to 767 (AGEAASSDHDQKISRVTRKRPREPK). The 178-residue stretch at 797–974 (EIYMADTPSV…LQRIGLTGLA (178 aa)) folds into the Helicase ATP-binding domain. 810–817 (APPGYGKT) is an ATP binding site. A Helicase C-terminal domain is found at 1031 to 1180 (KLLLALFEIE…EFYGLESKKG (150 aa)). Disordered stretches follow at residues 1254–1278 (ANAS…NVRT) and 1294–1421 (TTES…DINK). Residues 1294-1397 (TTESTNSSTN…ATTTESTNAS (104 aa)) are compositionally biased toward low complexity. Basic and acidic residues predominate over residues 1398 to 1421 (AKEDANKDGNAEDNRFHPVTDINK).

The protein belongs to the helicase family. Yeast subtelomeric Y' repeat subfamily.

Its function is as follows. Catalyzes DNA unwinding and is involved in telomerase-independent telomere maintenance. This is Y' element ATP-dependent helicase protein 1 copy 5 (YRF1-5) from Saccharomyces cerevisiae (strain ATCC 204508 / S288c) (Baker's yeast).